The sequence spans 376 residues: Chaperone protein DnaJ (376 aa).

The 66-residue stretch at 5–70 (DYYEVLGVAR…NKRRMYDSHG (66 aa)) folds into the J domain. Residues 132–209 (GVERRIEIPT…CHGNGRVEED (78 aa)) form a CR-type zinc finger. Positions 145, 148, 161, 164, 183, 186, 197, and 200 each coordinate Zn(2+). 4 CXXCXGXG motif repeats span residues 145–152 (CGDCDGSG), 161–168 (CNVCHGRG), 183–190 (CHNCGGRG), and 197–204 (CKTCHGNG). Positions 223–242 (GDRIRLSGEGEAGPAGTPPG) are disordered.

This sequence belongs to the DnaJ family. In terms of assembly, homodimer. Zn(2+) serves as cofactor.

The protein localises to the cytoplasm. Its function is as follows. Participates actively in the response to hyperosmotic and heat shock by preventing the aggregation of stress-denatured proteins and by disaggregating proteins, also in an autonomous, DnaK-independent fashion. Unfolded proteins bind initially to DnaJ; upon interaction with the DnaJ-bound protein, DnaK hydrolyzes its bound ATP, resulting in the formation of a stable complex. GrpE releases ADP from DnaK; ATP binding to DnaK triggers the release of the substrate protein, thus completing the reaction cycle. Several rounds of ATP-dependent interactions between DnaJ, DnaK and GrpE are required for fully efficient folding. Also involved, together with DnaK and GrpE, in the DNA replication of plasmids through activation of initiation proteins. This Stenotrophomonas maltophilia (strain R551-3) protein is Chaperone protein DnaJ.